The primary structure comprises 571 residues: MIRFELGNQICVCLSENDISLEINNTLHHAIPVSSNEYAILSTIATYGSLNAPISQRVIERKITQHYKMALPENGFKNAVAALRKKFRKLTEDHVSPTRNIIENIHRTGYFIPFTMLHTHQSGIYQQKRINQHTKNSVRKALRICLRNKRIYTDIAWVLLVTTAIFFSVCYYAINSIVKHNYLDSALDIADSLSQMSCYADEDQLKGLFDNVKLVESSMMLDRFNIRCLVTPEAVVPVSQKAFNEWSDNSNYTTQSFDINNATILVRVKNINLQNNVESHISRFFLSGMKLYTNTGTSFEIGNTNGRYFHYQIKDTGYKEVYYISGPLKSIILLSLFFLVILRHRSLQAFITYLFAIREFHIKLEPIYNTSTQQNIHYEALSRFKVKNTQRFIETLISNGLLLIHTILVIRAIYAKQPTLLVPISINVCPSLLRGRNFSTLYQELASRDCRLLTIEITENASMYYTSEIYDNVAKLKLLNCKISIDDFGTGNNNVSLISKINPDYLKIDREFVIGLKSDDKKVETLRQLIAMGNTYRCTVIVEGVETADSAHLLTTLGAYIHQGYFYPLHF.

Helical transmembrane passes span 155–175, 321–341, and 395–415; these read IAWV…YAIN, VYYI…FLVI, and TLIS…AIYA. Residues 344–571 enclose the EAL domain; sequence HRSLQAFITY…HQGYFYPLHF (228 aa).

The protein localises to the cell inner membrane. The catalysed reaction is 3',3'-c-di-GMP + H2O = 5'-phosphoguanylyl(3'-&gt;5')guanosine + H(+). Its function is as follows. Cyclic di-GMP phosphodiesterase that plays an important role in modulating the global c-di-GMP pool. Its ability to alter the c-di-GMP pool has an effect on swimming motility, swarming motility and biofilm formation, multicellular behaviors that are important for the survival and dissemination of this environmental pathogen. Exhibits a dual function, namely, c-di-GMP degradation and modulation of its own expression. The polypeptide is Cyclic di-GMP phosphodiesterase TpdA (Vibrio parahaemolyticus serotype O3:K6 (strain RIMD 2210633)).